The following is a 75-amino-acid chain: Salivary glue protein Sgs-8 (75 aa).

Positions methionine 1–cysteine 24 are cleaved as a signal peptide.

The sequence is that of Salivary glue protein Sgs-8 (Sgs8) from Drosophila melanogaster (Fruit fly).